The chain runs to 303 residues: UDP-3-O-acyl-N-acetylglucosamine deacetylase (303 aa).

3 residues coordinate Zn(2+): H78, H237, and D241. Residue H264 is the Proton donor of the active site.

It belongs to the LpxC family. Requires Zn(2+) as cofactor.

It carries out the reaction a UDP-3-O-[(3R)-3-hydroxyacyl]-N-acetyl-alpha-D-glucosamine + H2O = a UDP-3-O-[(3R)-3-hydroxyacyl]-alpha-D-glucosamine + acetate. Its pathway is glycolipid biosynthesis; lipid IV(A) biosynthesis; lipid IV(A) from (3R)-3-hydroxytetradecanoyl-[acyl-carrier-protein] and UDP-N-acetyl-alpha-D-glucosamine: step 2/6. Its function is as follows. Catalyzes the hydrolysis of UDP-3-O-myristoyl-N-acetylglucosamine to form UDP-3-O-myristoylglucosamine and acetate, the committed step in lipid A biosynthesis. In Pseudomonas fluorescens (strain Pf0-1), this protein is UDP-3-O-acyl-N-acetylglucosamine deacetylase.